A 297-amino-acid polypeptide reads, in one-letter code: Myozenin-1 (297 aa).

The tract at residues 1–34 (MPLSGTPAPNKKRKSSKLIMELTGGGQESSGLNL) is disordered. A Phosphoserine modification is found at Ser82. A disordered region spans residues 105-172 (FSYSKSSGGG…ALPDNQAGGE (68 aa)). Positions 118-128 (RSGSAGQYGSD) are enriched in low complexity. Positions 136 to 162 (SGSGSGSGSGPGSGGAGGPGGHSGRGG) are enriched in gly residues.

The protein belongs to the myozenin family. Interacts with ACTN2, ACTN3, FLNA, FLNB, FLNC, LDB3, PPP3CA and TCAP. Interacts via its C-terminal region with MYOT.

The protein localises to the nucleus. The protein resides in the cell projection. Its subcellular location is the pseudopodium. In terms of biological role, myozenins may serve as intracellular binding proteins involved in linking Z-disk proteins such as alpha-actinin, gamma-filamin, TCAP/telethonin, LDB3/ZASP and localizing calcineurin signaling to the sarcomere. Plays an important role in the modulation of calcineurin signaling. May play a role in myofibrillogenesis. The protein is Myozenin-1 (MYOZ1) of Bos taurus (Bovine).